The following is a 436-amino-acid chain: Phosphatidylinositol transfer protein CSR1 (436 aa).

The interval 85–104 is disordered; it reads VYDAEKVEDSDAEKEKPTPQ. Residues 86 to 102 are compositionally biased toward basic and acidic residues; the sequence is YDAEKVEDSDAEKEKPT. A CRAL-TRIO domain is found at 188-347; that stretch reads KKGIVKQLEL…ELGGKDEYNF (160 aa).

Belongs to the PITP family. In terms of assembly, binds phosphatidylinositol (PtdIns).

It localises to the cytoplasm. It is found in the endosome. Non-classical phosphatidylinositol (PtdIns) transfer protein (PITP), which exhibits PtdIns-binding/transfer activity in the absence of detectable PtdCho-binding/transfer activity. May also regulate post-Golgi membrane-trafficking events and have a role resistance to oxidative stress. This is Phosphatidylinositol transfer protein CSR1 (CSR1) from Eremothecium gossypii (strain ATCC 10895 / CBS 109.51 / FGSC 9923 / NRRL Y-1056) (Yeast).